Consider the following 564-residue polypeptide: Chaperonin GroEL 2 (564 aa).

Residues 29–32 (TIGP), 86–90 (DGTTT), Gly413, and Asp493 each bind ATP. A disordered region spans residues 521 to 541 (DKPEPPAPAGDGGGDPMGGMG). Over residues 530–541 (GDGGGDPMGGMG) the composition is skewed to gly residues.

It belongs to the chaperonin (HSP60) family. As to quaternary structure, forms a cylinder of 14 subunits composed of two heptameric rings stacked back-to-back. Interacts with the co-chaperonin GroES.

The protein localises to the cytoplasm. The catalysed reaction is ATP + H2O + a folded polypeptide = ADP + phosphate + an unfolded polypeptide.. In terms of biological role, together with its co-chaperonin GroES, plays an essential role in assisting protein folding. The GroEL-GroES system forms a nano-cage that allows encapsulation of the non-native substrate proteins and provides a physical environment optimized to promote and accelerate protein folding. This chain is Chaperonin GroEL 2, found in Prochlorococcus marinus (strain MIT 9303).